We begin with the raw amino-acid sequence, 416 residues long: Serine hydroxymethyltransferase (416 aa).

(6S)-5,6,7,8-tetrahydrofolate-binding positions include Leu121 and 125–127 (GHL). Position 230 is an N6-(pyridoxal phosphate)lysine (Lys230). 355-357 (SPF) is a (6S)-5,6,7,8-tetrahydrofolate binding site.

This sequence belongs to the SHMT family. As to quaternary structure, homodimer. Pyridoxal 5'-phosphate serves as cofactor.

The protein localises to the cytoplasm. It catalyses the reaction (6R)-5,10-methylene-5,6,7,8-tetrahydrofolate + glycine + H2O = (6S)-5,6,7,8-tetrahydrofolate + L-serine. Its pathway is one-carbon metabolism; tetrahydrofolate interconversion. It participates in amino-acid biosynthesis; glycine biosynthesis; glycine from L-serine: step 1/1. Functionally, catalyzes the reversible interconversion of serine and glycine with tetrahydrofolate (THF) serving as the one-carbon carrier. This reaction serves as the major source of one-carbon groups required for the biosynthesis of purines, thymidylate, methionine, and other important biomolecules. Also exhibits THF-independent aldolase activity toward beta-hydroxyamino acids, producing glycine and aldehydes, via a retro-aldol mechanism. This chain is Serine hydroxymethyltransferase, found in Streptococcus thermophilus (strain CNRZ 1066).